Here is a 207-residue protein sequence, read N- to C-terminus: 3-isopropylmalate dehydratase small subunit (207 aa).

It belongs to the LeuD family. LeuD type 1 subfamily. In terms of assembly, heterodimer of LeuC and LeuD.

The catalysed reaction is (2R,3S)-3-isopropylmalate = (2S)-2-isopropylmalate. It functions in the pathway amino-acid biosynthesis; L-leucine biosynthesis; L-leucine from 3-methyl-2-oxobutanoate: step 2/4. Its function is as follows. Catalyzes the isomerization between 2-isopropylmalate and 3-isopropylmalate, via the formation of 2-isopropylmaleate. The polypeptide is 3-isopropylmalate dehydratase small subunit (Rhodospirillum rubrum (strain ATCC 11170 / ATH 1.1.1 / DSM 467 / LMG 4362 / NCIMB 8255 / S1)).